We begin with the raw amino-acid sequence, 1118 residues long: Sodium-driven chloride bicarbonate exchanger (1118 aa).

4 disordered regions span residues 1 to 23 (MEIK…EEAV), 58 to 96 (GRKS…DTPS), 245 to 312 (KQSE…PPHQ), and 457 to 476 (NGTA…GPEL). Residues 1 to 509 (MEIKDQGAQM…DFRDAFSLQC (509 aa)) are Cytoplasmic-facing. Basic residues predominate over residues 59–76 (RKSHRRHRHRGHKHRKRD). Over residues 77–90 (RERDSGLEDGRESP) the composition is skewed to basic and acidic residues. Serine 89 is subject to Phosphoserine. Phosphothreonine is present on threonine 94. Positions 248–264 (EPNSMDKNAGQVVSPQS) are enriched in polar residues. Phosphoserine is present on serine 276. Residues 510–530 (LASFLFLYCACMSPVITFGGL) traverse the membrane as a helical segment. At 531–538 (LGEATEGR) the chain is on the extracellular side. The chain crosses the membrane as a helical span at residues 539–559 (ISAIESLFGASMTGIAYSLFG). Over 560–562 (GQP) the chain is Cytoplasmic. The chain crosses the membrane as a helical span at residues 563–583 (LTILGSTGPVLVFEKILFKFC). The Extracellular segment spans residues 584–596 (KEYGLSYLSLRAS). A helical transmembrane segment spans residues 597-617 (IGLWTATLCIILVATDASSLV). The Cytoplasmic segment spans residues 618-626 (CYITRFTEE). The chain crosses the membrane as a helical span at residues 627–647 (AFASLICIIFIYEALEKLFEL). At 648–720 (SEAYPINMHN…VGRACGHDHP (73 aa)) the chain is on the extracellular side. Asparagine 674, asparagine 677, asparagine 687, and asparagine 697 each carry an N-linked (GlcNAc...) asparagine glycan. Residues 721-741 (YVPDVLFWSVILFFSTVTLSA) traverse the membrane as a helical segment. Residues 742–762 (TLKQFKTSRYFPTKVRSIVSD) are Cytoplasmic-facing. A helical transmembrane segment spans residues 763-783 (FAVFLTILCMVLIDYAIGIPS). At 784–809 (PKLQVPSVFKPTRDDRGWFVTPLGPN) the chain is on the extracellular side. The helical transmembrane segment at 810–830 (PWWTVIAAIIPALLCTILIFM) threads the bilayer. Residues 831–855 (DQQITAVIINRKEHKLKKGCGYHLD) lie on the Cytoplasmic side of the membrane. The helical transmembrane segment at 856–876 (LLMVAVMLGVCSIMGLPWFVA) threads the bilayer. Residues 877–912 (ATVLSITHVNSLKLESECSAPGEQPKFLGIREQRVT) are Extracellular-facing. The chain crosses the membrane as a helical span at residues 913–933 (GLMIFILMGSSVFMTSILKFI). At 934–935 (PM) the chain is on the cytoplasmic side. A helical transmembrane segment spans residues 936 to 956 (PVLYGVFLYMGASSLKGIQFF). Topologically, residues 957–998 (DRIKLFWMPAKHQPDFIYLRHVPLRKVHLFTIIQMSCLGLLW) are extracellular. Residues 999–1019 (IIKVSRAAIVFPMMVLALVFV) form a helical membrane-spanning segment. Residues 1020–1118 (RKLMDLLFTK…SSFPSKSSPS (99 aa)) are Cytoplasmic-facing. A phosphoserine mark is found at serine 1057 and serine 1085.

It belongs to the anion exchanger (TC 2.A.31) family. As to expression, predominantly expressed in the brain.

It localises to the basolateral cell membrane. It is found in the apical cell membrane. The protein localises to the cell projection. The protein resides in the dendrite. Its subcellular location is the axon. It localises to the perikaryon. It is found in the presynapse. The protein localises to the postsynapse. The catalysed reaction is 2 hydrogencarbonate(out) + chloride(in) + Na(+)(out) = 2 hydrogencarbonate(in) + chloride(out) + Na(+)(in). Sodium/bicarbonate cotransporter which plays an important role in regulating intracellular pH. Has been shown to act as a sodium/bicarbonate cotransporter in exchange for intracellular chloride. Has also been shown to act as a sodium/biocarbonate cotransporter which does not couple net influx of bicarbonate to net efflux of chloride, with the observed chloride efflux being due to chloride self-exchange. Controls neuronal pH and may contribute to the secretion of cerebrospinal fluid. Acting on presynaptic intracellular pH, it promotes GABA release, reduces the excitability of CA1 pyramidal neurons, and modulates short-term synaptic plasticity. Required in retinal cells to maintain normal pH which is necessary for normal vision. In the kidney, likely to mediate bicarbonate reclamation in the apical membrane of the proximal tubules. This is Sodium-driven chloride bicarbonate exchanger from Homo sapiens (Human).